The following is a 158-amino-acid chain: 6,7-dimethyl-8-ribityllumazine synthase (158 aa).

5-amino-6-(D-ribitylamino)uracil is bound by residues Phe-22, 57–59 (AYE), and 84–86 (TVI). Residue 89–90 (GT) coordinates (2S)-2-hydroxy-3-oxobutyl phosphate. His-92 (proton donor) is an active-site residue. A 5-amino-6-(D-ribitylamino)uracil-binding site is contributed by Phe-117. Arg-131 contributes to the (2S)-2-hydroxy-3-oxobutyl phosphate binding site.

The protein belongs to the DMRL synthase family. In terms of assembly, forms an icosahedral capsid composed of 60 subunits, arranged as a dodecamer of pentamers.

It catalyses the reaction (2S)-2-hydroxy-3-oxobutyl phosphate + 5-amino-6-(D-ribitylamino)uracil = 6,7-dimethyl-8-(1-D-ribityl)lumazine + phosphate + 2 H2O + H(+). Its pathway is cofactor biosynthesis; riboflavin biosynthesis; riboflavin from 2-hydroxy-3-oxobutyl phosphate and 5-amino-6-(D-ribitylamino)uracil: step 1/2. Catalyzes the formation of 6,7-dimethyl-8-ribityllumazine by condensation of 5-amino-6-(D-ribitylamino)uracil with 3,4-dihydroxy-2-butanone 4-phosphate. This is the penultimate step in the biosynthesis of riboflavin. The polypeptide is 6,7-dimethyl-8-ribityllumazine synthase (Pectobacterium atrosepticum (strain SCRI 1043 / ATCC BAA-672) (Erwinia carotovora subsp. atroseptica)).